We begin with the raw amino-acid sequence, 380 residues long: Guanine nucleotide-binding protein alpha-1 subunit (380 aa).

The interval 1 to 25 (MGSSCSRSHSLSEAETTKNAKSADI) is disordered. Residue Gly2 is the site of N-myristoyl glycine attachment. Residue Cys5 is the site of S-palmitoyl cysteine attachment. Residues 10–25 (SLSEAETTKNAKSADI) show a composition bias toward basic and acidic residues. Residues 38–380 (HIHKLLLLGA…ESMRRSREGT (343 aa)) form the G-alpha domain. A G1 motif region spans residues 41 to 54 (KLLLLGAGESGKST). GTP-binding residues include Glu49, Ser50, Gly51, Lys52, Ser53, Thr54, Asp163, Leu188, Tyr189, Thr194, Gly222, Asn288, Lys289, Asp291, and Ala356. Ser53 is a binding site for Mg(2+). Positions 186 to 194 (DVLYARVRT) are G2 motif. Thr194 lines the Mg(2+) pocket. The tract at residues 215-224 (YRLYDVGGQR) is G3 motif. Residues 284 to 291 (ILFLNKFD) are G4 motif. Residues 354 to 359 (TTALDQ) form a G5 motif region.

It belongs to the G-alpha family. G proteins are composed of 3 units; alpha, beta and gamma. The alpha chain contains the guanine nucleotide binding site. Interacts with COLD1. Mg(2+) is required as a cofactor.

The protein localises to the cell membrane. In terms of biological role, guanine nucleotide-binding proteins (G proteins) are involved as modulators or transducers in various transmembrane signaling systems. May function in a signal transduction pathway required for normal growth and development of internodes, leaves, panicles and seeds. Involved in gibberellin signal transduction. Involved in R gene-mediated disease resistance. Functions upstream of the small GTPase RAC1 in the early steps of signaling. Involved in brassinosteroid response. May not be a signaling molecule in BRI1-mediated perception or transduction. The protein is Guanine nucleotide-binding protein alpha-1 subunit (GPA1) of Oryza sativa subsp. indica (Rice).